We begin with the raw amino-acid sequence, 487 residues long: ATP-dependent rRNA helicase RRP3 (487 aa).

A disordered region spans residues 22 to 67 (IKRKALEKQQQAHANEPSPSDEDSAQSNSKDSNSNEQPEESEEIFE). Positions 67 to 95 (ESFTELDLVPELIEACKNLNYNKPTPIQS) match the Q motif motif. The region spanning 98-270 (IPPALKGSDI…RASLTNPVKC (173 aa)) is the Helicase ATP-binding domain. 111-118 (AQTGSGKT) lines the ATP pocket. The DEAD box signature appears at 217–220 (DEAD). The Helicase C-terminal domain occupies 298–442 (LIYLLNEFIG…ENVDKDAILA (145 aa)). The tract at residues 459-487 (NRRNKEKQARGKGRRGRMATRDNMDREER) is disordered. Residues 477-487 (ATRDNMDREER) are compositionally biased toward basic and acidic residues.

The protein belongs to the DEAD box helicase family. DDX47/RRP3 subfamily. In terms of assembly, interacts with the SSU processome.

It localises to the nucleus. It carries out the reaction ATP + H2O = ADP + phosphate + H(+). In terms of biological role, ATP-dependent rRNA helicase required for pre-ribosomal RNA processing. Involved in the maturation of the 35S-pre-rRNA and to its cleavage to mature 18S rRNA. The protein is ATP-dependent rRNA helicase RRP3 of Kluyveromyces lactis (strain ATCC 8585 / CBS 2359 / DSM 70799 / NBRC 1267 / NRRL Y-1140 / WM37) (Yeast).